The chain runs to 260 residues: Proansamycin X synthase (260 aa).

The active-site Acyl-thioester intermediate is Cys-73. Residues His-111 and Asp-126 contribute to the active site.

It belongs to the arylamine N-acetyltransferase family.

Its pathway is antibiotic biosynthesis; rifamycin B biosynthesis. Functionally, catalyzes the release of the completed linear polyketide from the rif PKS by forming an intramolecular amide bond, in this way terminating polyketide assembly and forming the macrocyclic compound proansamycin X, an intermediate in the rifamycin B biosynthesis. The sequence is that of Proansamycin X synthase (rifF) from Amycolatopsis mediterranei (strain S699) (Nocardia mediterranei).